Here is a 616-residue protein sequence, read N- to C-terminus: Glutamine--fructose-6-phosphate aminotransferase [isomerizing] (616 aa).

The Nucleophile; for GATase activity role is filled by Cys-2. The Glutamine amidotransferase type-2 domain occupies 2–222; sequence CGIIGYSGPR…QERIVALSGD (221 aa). Residues 70-89 form a disordered region; sequence TGIGHTRWATHGEPSDRNAH. 2 consecutive SIS domains span residues 289–428 and 461–606; these read IRDD…LRGF and LAHW…VDRP. Residue Lys-611 is the For Fru-6P isomerization activity of the active site.

As to quaternary structure, homodimer.

The protein localises to the cytoplasm. It catalyses the reaction D-fructose 6-phosphate + L-glutamine = D-glucosamine 6-phosphate + L-glutamate. In terms of biological role, catalyzes the first step in hexosamine metabolism, converting fructose-6P into glucosamine-6P using glutamine as a nitrogen source. This chain is Glutamine--fructose-6-phosphate aminotransferase [isomerizing], found in Tropheryma whipplei (strain TW08/27) (Whipple's bacillus).